We begin with the raw amino-acid sequence, 211 residues long: Porin MspA (211 aa).

Positions 1–27 are cleaved as a signal peptide; that stretch reads MKAISRVLIAMVAAIAALFTSTGTSHA.

This sequence belongs to the mycobacterial porin (TC 1.B.24) family. In terms of assembly, forms very stable octamers. Isolated as a 100 kDa complex that can be reduced to monomers upon boiling in 80% dimethyl sulfoxide for 15 minutes. Structures show a goblet with the wide end on the exterior of the outer membrane and a central channel. It is not known if mixed oligomers of MspA with other Msp subunits form in vivo.

The protein localises to the cell outer membrane. It is found in the secreted. It localises to the cell wall. In terms of biological role, the major porin in this organism, forms a water-filled channel which favors the permeation of cations, amino acids, iron Fe(3+) and less efficiently phosphate. Does not transport Fe-ExoMS, the predominant siderophore. Plays a role in transport of beta-lactamase and hydrophilic fluoroquinolone antibiotics such as norfloxacin as well as chloramphenicol. There are about 2400 porins in wild-type, 800 in an mspA deletion and 150 in a double mspA-mspC deletion. Different conductance values with maxima at 2.3 and 4.6 nanosiemens might be caused by a simultaneous reconstitution of MspA channels into the membrane or by the existence of different MspA conformations. This chain is Porin MspA (mspA), found in Mycolicibacterium smegmatis (strain ATCC 700084 / mc(2)155) (Mycobacterium smegmatis).